The following is a 545-amino-acid chain: uncharacterized protein (545 aa).

The span at 1–10 (MSRYRFRKAR) shows a compositional bias: basic residues. The tract at residues 1–25 (MSRYRFRKARSNWPMGQNDSRWEPP) is disordered. 2 WD repeats span residues 417 to 456 (ACNT…NPMM) and 460 to 501 (GHSN…MLCS).

This is an uncharacterized protein from Caenorhabditis elegans.